The following is a 181-amino-acid chain: Large ribosomal subunit protein uL16 (181 aa).

This sequence belongs to the universal ribosomal protein uL16 family.

The sequence is that of Large ribosomal subunit protein uL16 from Pyrococcus abyssi (strain GE5 / Orsay).